The following is a 62-amino-acid chain: Small ribosomal subunit protein bS21 (62 aa).

Basic and acidic residues predominate over residues 43–52 (VKKKLKSEAA). Residues 43-62 (VKKKLKSEAARKRKAKKKRF) are disordered. Positions 53-62 (RKRKAKKKRF) are enriched in basic residues.

Belongs to the bacterial ribosomal protein bS21 family.

The polypeptide is Small ribosomal subunit protein bS21 (Levilactobacillus brevis (strain ATCC 367 / BCRC 12310 / CIP 105137 / JCM 1170 / LMG 11437 / NCIMB 947 / NCTC 947) (Lactobacillus brevis)).